The primary structure comprises 471 residues: Sestrin-2 (471 aa).

An N-acetylmethionine modification is found at M1. Residues 57-230 (GLEALMSSGR…APSPPSEQST (174 aa)) form an N-terminal domain; mediates the alkylhydroperoxide reductase activity region. C116 acts as the Cysteine sulfenic acid (-SOH) intermediate in catalysis. A Glycyl lysine isopeptide (Lys-Gly) (interchain with G-Cter in ubiquitin) cross-link involves residue K166. Positions 212 to 241 (DPEGSPAPQAPSPPSEQSTPPSRDSLNHSG) are disordered. S240 bears the Phosphoserine mark. The segment at 299-471 (ANPDMLCFVE…ALRAITRYMT (173 aa)) is C-terminal domain; mediates TORC1 regulation. L-leucine-binding positions include 365-368 (TYNT), T377, and E442.

The protein belongs to the sestrin family. As to quaternary structure, interacts with the GATOR2 complex which is composed of MIOS, SEC13, SEH1L, WDR24 and WDR59; the interaction is negatively regulated by leucine. Conveys leucine availability via direct interaction with SEH1L and WDR24 components of the GATOR2 complex. Interacts with RRAGA, RRAGB, RRAGC and RRAGD; may function as a guanine nucleotide dissociation inhibitor for RRAGs and regulate them. May interact with the TORC2 complex. Interacts with KEAP1, RBX1, SQSTM and ULK1; to regulate the degradation of KEAP1. May also associate with the complex composed of TSC1, TSC2 and the AMP-responsive protein kinase/AMPK to regulate TORC1 signaling. May interact with PRDX1. Post-translationally, phosphorylated by ULK1 at multiple sites. In terms of processing, ubiquitinated at Lys-166 by RNF167 via 'Lys-63'-linked polyubiquitination in response to leucine deprivation: ubiquitination promotes SESN2-interaction with the GATOR2 complex, leading to inhibit the TORC1 signaling pathway. Deubiquitinated at Lys-166 by STAMBPL1, promoting the TORC1 signaling pathway. Ubiquitinated by RNF186; ubiquitination mediates proteasomal degradation.

The protein resides in the cytoplasm. It carries out the reaction a hydroperoxide + L-cysteinyl-[protein] = S-hydroxy-L-cysteinyl-[protein] + an alcohol. Functionally, functions as an intracellular leucine sensor that negatively regulates the mTORC1 signaling pathway through the GATOR complex. In absence of leucine, binds the GATOR subcomplex GATOR2 and prevents mTORC1 signaling. Binding of leucine to SESN2 disrupts its interaction with GATOR2 thereby activating the TORC1 signaling pathway. This stress-inducible metabolic regulator also plays a role in protection against oxidative and genotoxic stresses. May negatively regulate protein translation in response to endoplasmic reticulum stress, via mTORC1. May positively regulate the transcription by NFE2L2 of genes involved in the response to oxidative stress by facilitating the SQSTM1-mediated autophagic degradation of KEAP1. May also mediate TP53 inhibition of TORC1 signaling upon genotoxic stress. Moreover, may prevent the accumulation of reactive oxygen species (ROS) through the alkylhydroperoxide reductase activity born by the N-terminal domain of the protein. Was originally reported to contribute to oxidative stress resistance by reducing PRDX1. However, this could not be confirmed. The chain is Sestrin-2 from Bos taurus (Bovine).